The chain runs to 407 residues: Argininosuccinate synthase (407 aa).

Residues 16–24 and Ala-44 each bind ATP; that span reads AYSGGLDTS. L-citrulline-binding residues include Tyr-96 and Ser-101. Residue Gly-126 participates in ATP binding. 3 residues coordinate L-aspartate: Thr-128, Asn-132, and Asp-133. L-citrulline is bound at residue Asn-132. 5 residues coordinate L-citrulline: Arg-136, Ser-185, Ser-194, Glu-270, and Tyr-282.

This sequence belongs to the argininosuccinate synthase family. Type 1 subfamily. Homotetramer.

The protein resides in the cytoplasm. The enzyme catalyses L-citrulline + L-aspartate + ATP = 2-(N(omega)-L-arginino)succinate + AMP + diphosphate + H(+). Its pathway is amino-acid biosynthesis; L-arginine biosynthesis; L-arginine from L-ornithine and carbamoyl phosphate: step 2/3. In Shewanella frigidimarina (strain NCIMB 400), this protein is Argininosuccinate synthase.